We begin with the raw amino-acid sequence, 193 residues long: Putative kinase protein 029R (193 aa).

9–17 contributes to the ATP binding site; that stretch reads GIIGSGKSS. The substrate site is built by Glu-31, Tyr-43, and Gln-54. Glu-78 (proton acceptor) is an active-site residue. Substrate-binding residues include Arg-79 and Glu-142.

This sequence belongs to the DCK/DGK family.

This Aedes vexans (Inland floodwater mosquito) protein is Putative kinase protein 029R.